Reading from the N-terminus, the 459-residue chain is Trigger factor (459 aa).

The 80-residue stretch at 166–245 folds into the PPIase FKBP-type domain; that stretch reads GDFANIDLTA…VNSVKAEELP (80 aa).

It belongs to the FKBP-type PPIase family. Tig subfamily.

The protein resides in the cytoplasm. It catalyses the reaction [protein]-peptidylproline (omega=180) = [protein]-peptidylproline (omega=0). Functionally, involved in protein export. Acts as a chaperone by maintaining the newly synthesized protein in an open conformation. Functions as a peptidyl-prolyl cis-trans isomerase. The polypeptide is Trigger factor (Bifidobacterium longum (strain DJO10A)).